The sequence spans 304 residues: Glutaminase (304 aa).

S63, N113, E157, N164, Y188, Y240, and V258 together coordinate substrate.

The protein belongs to the glutaminase family. In terms of assembly, homotetramer.

The catalysed reaction is L-glutamine + H2O = L-glutamate + NH4(+). This chain is Glutaminase, found in Christiangramia forsetii (strain DSM 17595 / CGMCC 1.15422 / KT0803) (Gramella forsetii).